We begin with the raw amino-acid sequence, 82 residues long: Turripeptide Gsp9.2 (82 aa).

A signal peptide spans 1-23 (MMAKLMITVMMVLLLSLQQGADG). Residues 24–46 (RSERWRKNQMAASSIMRNLITAR) constitute a propeptide that is removed on maturation. 4-hydroxyproline is present on residues P49 and P50. Cystine bridges form between C53/C68, C58/C72, and C64/C79. Position 56 is a 4-carboxyglutamate (E56).

Belongs to the Pg turripeptide superfamily. In terms of tissue distribution, expressed by the venom duct.

Its subcellular location is the secreted. This chain is Turripeptide Gsp9.2, found in Gemmula speciosa (Splendid gem-turris).